Reading from the N-terminus, the 41-residue chain is ORF3c protein (41 aa).

Functionally, may play a role in host modulation. The protein is ORF3c protein of Severe acute respiratory syndrome coronavirus 2 (2019-nCoV).